We begin with the raw amino-acid sequence, 431 residues long: Tryptophan synthase beta chain 2 (431 aa).

K111 bears the N6-(pyridoxal phosphate)lysine mark.

It belongs to the TrpB family. Tetramer of two alpha and two beta chains. Requires pyridoxal 5'-phosphate as cofactor.

It catalyses the reaction (1S,2R)-1-C-(indol-3-yl)glycerol 3-phosphate + L-serine = D-glyceraldehyde 3-phosphate + L-tryptophan + H2O. Its pathway is amino-acid biosynthesis; L-tryptophan biosynthesis; L-tryptophan from chorismate: step 5/5. Its function is as follows. The beta subunit is responsible for the synthesis of L-tryptophan from indole and L-serine. In Sulfurisphaera tokodaii (strain DSM 16993 / JCM 10545 / NBRC 100140 / 7) (Sulfolobus tokodaii), this protein is Tryptophan synthase beta chain 2 (trpB2).